A 335-amino-acid chain; its full sequence is Pyridoxal 5'-phosphate synthase subunit PdxS (335 aa).

A D-ribose 5-phosphate-binding site is contributed by Asp59. Residue Lys116 is the Schiff-base intermediate with D-ribose 5-phosphate of the active site. Gly188 is a binding site for D-ribose 5-phosphate. Lys200 lines the D-glyceraldehyde 3-phosphate pocket. D-ribose 5-phosphate-binding positions include Gly253 and 274–275 (GS).

The protein belongs to the PdxS/SNZ family. As to quaternary structure, in the presence of PdxT, forms a dodecamer of heterodimers.

The catalysed reaction is aldehydo-D-ribose 5-phosphate + D-glyceraldehyde 3-phosphate + L-glutamine = pyridoxal 5'-phosphate + L-glutamate + phosphate + 3 H2O + H(+). It functions in the pathway cofactor biosynthesis; pyridoxal 5'-phosphate biosynthesis. In terms of biological role, catalyzes the formation of pyridoxal 5'-phosphate from ribose 5-phosphate (RBP), glyceraldehyde 3-phosphate (G3P) and ammonia. The ammonia is provided by the PdxT subunit. Can also use ribulose 5-phosphate and dihydroxyacetone phosphate as substrates, resulting from enzyme-catalyzed isomerization of RBP and G3P, respectively. The polypeptide is Pyridoxal 5'-phosphate synthase subunit PdxS (Desulfurococcus amylolyticus (strain DSM 18924 / JCM 16383 / VKM B-2413 / 1221n) (Desulfurococcus kamchatkensis)).